The primary structure comprises 145 residues: D-aminoacyl-tRNA deacylase (145 aa).

The Gly-cisPro motif, important for rejection of L-amino acids motif lies at 137 to 138 (GP).

It belongs to the DTD family. Homodimer.

The protein localises to the cytoplasm. The enzyme catalyses glycyl-tRNA(Ala) + H2O = tRNA(Ala) + glycine + H(+). It carries out the reaction a D-aminoacyl-tRNA + H2O = a tRNA + a D-alpha-amino acid + H(+). In terms of biological role, an aminoacyl-tRNA editing enzyme that deacylates mischarged D-aminoacyl-tRNAs. Also deacylates mischarged glycyl-tRNA(Ala), protecting cells against glycine mischarging by AlaRS. Acts via tRNA-based rather than protein-based catalysis; rejects L-amino acids rather than detecting D-amino acids in the active site. By recycling D-aminoacyl-tRNA to D-amino acids and free tRNA molecules, this enzyme counteracts the toxicity associated with the formation of D-aminoacyl-tRNA entities in vivo and helps enforce protein L-homochirality. The chain is D-aminoacyl-tRNA deacylase from Shewanella baltica (strain OS195).